The sequence spans 735 residues: E3 ubiquitin-protein ligase SH3RF2 (735 aa).

The RING-type zinc finger occupies 12 to 53 (CPVCFEKLDVTAKVLPCQHTFCKPCLQRIFKAHKELRCPECR). SH3 domains follow at residues 125–184 (DGVP…VIKQ) and 187–252 (QPPP…PNLS). Disordered regions lie at residues 260-301 (SKGH…GSGQ) and 335-373 (TSPS…STAM). A compositionally biased stretch (polar residues) spans 273 to 289 (LMSSPSRGKATNTSTLR). The tract at residues 373 to 466 (MVSVPSSQQH…RHPTVCTTWA (94 aa)) is interaction with PAK4. Positions 383-444 (LSTNMFVALH…PSDYVIPVFS (62 aa)) constitute an SH3 3 domain. Disordered regions lie at residues 472-534 (VSSQ…PVQS), 612-637 (ETPI…KPEN), and 649-735 (VRFQ…FPSK). Over residues 523-534 (RKNGSLQRPVQS) the composition is skewed to polar residues. The segment covering 617–627 (SEPPPKPPASA) has biased composition (pro residues). Positions 647–652 (KTVRFQ) are interaction with PPP1CA. Residue S655 is modified to Phosphoserine. Positions 715–735 (FSKTTPPVSTASVSQTLFPSK) are enriched in polar residues.

It belongs to the SH3RF family. In terms of assembly, interacts with FASLG and PPP1CA. Interacts with PAK4 and TNFRSF1A. Interacts with DLK1, MAP3K10, MAPK8IP1/JIP1, MAPK8IP2/JIP2 and MAPK8IP3/JIP3. Interacts with RAC1 (both active GTP- or inactive GDP-bound forms). Post-translationally, autoubiquitinated.

It is found in the nucleus. The enzyme catalyses S-ubiquitinyl-[E2 ubiquitin-conjugating enzyme]-L-cysteine + [acceptor protein]-L-lysine = [E2 ubiquitin-conjugating enzyme]-L-cysteine + N(6)-ubiquitinyl-[acceptor protein]-L-lysine.. Its pathway is protein modification; protein ubiquitination. Its function is as follows. Has E3 ubiquitin-protein ligase activity. Acts as an anti-apoptotic regulator of the JNK pathway by ubiquitinating and promoting the degradation of SH3RF1, a scaffold protein that is required for pro-apoptotic JNK activation. Facilitates TNF-alpha-mediated recruitment of adapter proteins TRADD and RIPK1 to TNFRSF1A and regulates PAK4 protein stability via inhibition of its ubiquitin-mediated proteasomal degradation. Inhibits PPP1CA phosphatase activity. The sequence is that of E3 ubiquitin-protein ligase SH3RF2 (Sh3rf2) from Rattus norvegicus (Rat).